A 359-amino-acid chain; its full sequence is Alpha-2-HS-glycoprotein (359 aa).

The first 18 residues, 1–18 (MKSFVLLFCLAQLWGCHS), serve as a signal peptide directing secretion. In terms of domain architecture, Cystatin fetuin-A-type 1 spans 27 to 133 (YKEPACDDPD…QFSVLFTKCD (107 aa)). 6 disulfides stabilise this stretch: cysteine 32-cysteine 350, cysteine 89-cysteine 100, cysteine 114-cysteine 132, cysteine 146-cysteine 149, cysteine 208-cysteine 219, and cysteine 230-cysteine 248. Asparagine 99 carries N-linked (GlcNAc...) asparagine glycosylation. Phosphoserine occurs at positions 134, 135, and 138. In terms of domain architecture, Cystatin fetuin-A-type 2 spans 144–256 (KLCPDCPLLA…TCTLFQTQPV (113 aa)). N-linked (GlcNAc...) asparagine glycosylation is found at asparagine 156 and asparagine 176. Residues 257 to 285 (IPQPQPDGAEAEAPSAVPDAAGPTPSAAG) are disordered. The O-linked (GalNAc...) serine glycan is linked to serine 271. Low complexity predominate over residues 276 to 285 (AAGPTPSAAG). Residue threonine 280 is glycosylated (O-linked (GalNAc...) threonine). Serine 282 and serine 296 each carry an O-linked (GalNAc...) serine glycan. Threonine 314 bears the Phosphothreonine mark. Residues serine 316, serine 320, serine 323, and serine 325 each carry the phosphoserine modification. Threonine 334 carries an O-linked (GalNAc...) threonine glycan. An O-linked (GalNAc...) serine; partial glycan is attached at serine 341.

Belongs to the fetuin family. Post-translationally, phosphorylated by FAM20C in the extracellular medium. Liver and bone.

It is found in the secreted. Its function is as follows. Promotes endocytosis, possesses opsonic properties and influences the mineral phase of bone. Suggested to have lymphocyte stimulating properties, lipid binding capability and to bind thyroid hormone. The polypeptide is Alpha-2-HS-glycoprotein (AHSG) (Bos taurus (Bovine)).